A 513-amino-acid polypeptide reads, in one-letter code: Histidine ammonia-lyase (513 aa).

The 5-imidazolinone (Ala-Gly) cross-link spans alanine 145–glycine 147. Residue serine 146 is modified to 2,3-didehydroalanine (Ser).

This sequence belongs to the PAL/histidase family. Contains an active site 4-methylidene-imidazol-5-one (MIO), which is formed autocatalytically by cyclization and dehydration of residues Ala-Ser-Gly.

It localises to the cytoplasm. The enzyme catalyses L-histidine = trans-urocanate + NH4(+). It functions in the pathway amino-acid degradation; L-histidine degradation into L-glutamate; N-formimidoyl-L-glutamate from L-histidine: step 1/3. The sequence is that of Histidine ammonia-lyase from Vibrio vulnificus (strain YJ016).